The primary structure comprises 372 residues: Ligninase B (372 aa).

A signal peptide spans 1–21 (MAFKQLFAAISLALSLSAANA). Residues 22 to 28 (AAVIEKR) constitute a propeptide that is removed on maturation. 4 disulfides stabilise this stretch: cysteine 31–cysteine 43, cysteine 42–cysteine 313, cysteine 62–cysteine 148, and cysteine 277–cysteine 345. The active-site Proton acceptor is histidine 75. The Ca(2+) site is built by aspartate 76, glycine 94, aspartate 96, and serine 98. A heme b-binding site is contributed by histidine 204. Positions 205, 222, 224, 227, and 229 each coordinate Ca(2+). N-linked (GlcNAc...) asparagine glycosylation is present at asparagine 285. Low complexity predominate over residues 350 to 361 (FPTLTTLPGPET). The disordered stretch occupies residues 350-372 (FPTLTTLPGPETSVQRIPPPPGA).

It belongs to the peroxidase family. Ligninase subfamily. Heme b is required as a cofactor. Requires Ca(2+) as cofactor.

It carries out the reaction 1-(3,4-dimethoxyphenyl)-2-(2-methoxyphenoxy)propane-1,3-diol + H2O2 = 3,4-dimethoxybenzaldehyde + guaiacol + glycolaldehyde + H2O. The catalysed reaction is 2 (3,4-dimethoxyphenyl)methanol + H2O2 = 2 (3,4-dimethoxyphenyl)methanol radical + 2 H2O. The protein operates within secondary metabolite metabolism; lignin degradation. Functionally, depolymerization of lignin. Catalyzes the C(alpha)-C(beta) cleavage of the propyl side chains of lignin. The protein is Ligninase B (LIPB) of Phanerodontia chrysosporium (White-rot fungus).